A 134-amino-acid polypeptide reads, in one-letter code: DNA-directed RNA polymerase subunit omega (134 aa).

Belongs to the RNA polymerase subunit omega family. In terms of assembly, the RNAP catalytic core consists of 2 alpha, 1 beta, 1 beta' and 1 omega subunit. When a sigma factor is associated with the core the holoenzyme is formed, which can initiate transcription.

The catalysed reaction is RNA(n) + a ribonucleoside 5'-triphosphate = RNA(n+1) + diphosphate. Functionally, promotes RNA polymerase assembly. Latches the N- and C-terminal regions of the beta' subunit thereby facilitating its interaction with the beta and alpha subunits. This is DNA-directed RNA polymerase subunit omega from Rhizobium johnstonii (strain DSM 114642 / LMG 32736 / 3841) (Rhizobium leguminosarum bv. viciae).